The chain runs to 196 residues: Chloroplastic ATP-dependent Clp protease proteolytic subunit 1 (196 aa).

The Nucleophile role is filled by Ser101. His126 is an active-site residue.

Belongs to the peptidase S14 family. Component of the chloroplastic Clp protease core complex which consist of at least 16 proteins: CLPP4 (3 copies), CLPP5 (3 copies), CLPR4 (2 copies), ClpP1 (1 copy), CLPP6 (1 copy), CLPR2 (1 copy), CLPT1 (1 copy), CLPT2 (1 copy) and 3 copies of CLPP3 and/or CLPR1 and/or CLPR3. The core complex is organized in two heptameric rings, one containing CLPP3,4,5,6 in a 1:2:3:1 ratio and the other CLPP1 and CLPR1,2,3,4 in a 3:1:1:1:1 ratio. As to expression, mostly expressed in leaves. Also detected in stems, and to a lower extent, in roots (at protein level).

Its subcellular location is the plastid. The protein resides in the chloroplast stroma. The enzyme catalyses Hydrolysis of proteins to small peptides in the presence of ATP and magnesium. alpha-casein is the usual test substrate. In the absence of ATP, only oligopeptides shorter than five residues are hydrolyzed (such as succinyl-Leu-Tyr-|-NHMec, and Leu-Tyr-Leu-|-Tyr-Trp, in which cleavage of the -Tyr-|-Leu- and -Tyr-|-Trp bonds also occurs).. Functionally, cleaves peptides in various proteins in a process that requires ATP hydrolysis. Has a chymotrypsin-like activity. Plays a major role in the degradation of misfolded proteins. This is Chloroplastic ATP-dependent Clp protease proteolytic subunit 1 from Arabidopsis thaliana (Mouse-ear cress).